The following is a 159-amino-acid chain: MAALWVAGVGRKSLTVVASGAPRREFWSRLRKEKQPVVAETVEEVKKEPILVCPPLRSQAYIPPKDLQSRLESHVKEVFGSSVPTSWQEISLEDVHMKFSFLARLADDLGHAVPNSRLHQMCRVRDVLDFYTVPVQDRSKFDELIASNLPPNLKITWGY.

Belongs to the mitochondrion-specific ribosomal protein mL50 family. In terms of assembly, component of the mitochondrial ribosome large subunit (39S) which comprises a 16S rRNA and about 50 distinct proteins.

It localises to the mitochondrion. This Bos taurus (Bovine) protein is Large ribosomal subunit protein mL50 (MRPL50).